Here is a 606-residue protein sequence, read N- to C-terminus: NADH-ubiquinone oxidoreductase chain 5 (606 aa).

15 helical membrane-spanning segments follow: residues 3–23 (VINL…LPII), 38–58 (ITKT…LLFI), 87–107 (FFSL…MEFS), 124–144 (LLLF…LQLF), 180–200 (IGDM…NSWE), 216–236 (LLGL…HPWL), 244–264 (TPVS…FTLI), 276–296 (IQTS…ICAL), 304–323 (IIAL…IGIN), 328–350 (AFIH…GSII), 369–389 (MPIT…MPFL), 404–424 (MSYI…MTAS), 460–480 (LILG…PHTT), 483–503 (MTMP…GFTV), and 586–606 (LMKL…LIAL).

This sequence belongs to the complex I subunit 5 family. In terms of assembly, core subunit of respiratory chain NADH dehydrogenase (Complex I) which is composed of 45 different subunits.

It is found in the mitochondrion inner membrane. It catalyses the reaction a ubiquinone + NADH + 5 H(+)(in) = a ubiquinol + NAD(+) + 4 H(+)(out). Its function is as follows. Core subunit of the mitochondrial membrane respiratory chain NADH dehydrogenase (Complex I) which catalyzes electron transfer from NADH through the respiratory chain, using ubiquinone as an electron acceptor. Essential for the catalytic activity and assembly of complex I. The sequence is that of NADH-ubiquinone oxidoreductase chain 5 (MT-ND5) from Loxodonta africana (African elephant).